Here is a 118-residue protein sequence, read N- to C-terminus: Holo-[acyl-carrier-protein] synthase (118 aa).

Asp-8 and Glu-58 together coordinate Mg(2+).

It belongs to the P-Pant transferase superfamily. AcpS family. It depends on Mg(2+) as a cofactor.

It localises to the cytoplasm. The catalysed reaction is apo-[ACP] + CoA = holo-[ACP] + adenosine 3',5'-bisphosphate + H(+). In terms of biological role, transfers the 4'-phosphopantetheine moiety from coenzyme A to a Ser of acyl-carrier-protein. The protein is Holo-[acyl-carrier-protein] synthase of Lactobacillus helveticus (strain DPC 4571).